A 351-amino-acid polypeptide reads, in one-letter code: Ferredoxin--NADP reductase (351 aa).

FAD is bound by residues D44, Q52, Y57, V97, F132, D296, and S337.

The protein belongs to the ferredoxin--NADP reductase type 2 family. Homodimer. The cofactor is FAD.

It catalyses the reaction 2 reduced [2Fe-2S]-[ferredoxin] + NADP(+) + H(+) = 2 oxidized [2Fe-2S]-[ferredoxin] + NADPH. The sequence is that of Ferredoxin--NADP reductase from Paraburkholderia phymatum (strain DSM 17167 / CIP 108236 / LMG 21445 / STM815) (Burkholderia phymatum).